Consider the following 313-residue polypeptide: Aspartate carbamoyltransferase catalytic subunit (313 aa).

Carbamoyl phosphate is bound by residues Arg-61 and Thr-62. L-aspartate is bound at residue Lys-89. 3 residues coordinate carbamoyl phosphate: Arg-111, His-139, and Gln-142. Positions 172 and 227 each coordinate L-aspartate. Gly-268 and Pro-269 together coordinate carbamoyl phosphate.

It belongs to the aspartate/ornithine carbamoyltransferase superfamily. ATCase family. Heterododecamer (2C3:3R2) of six catalytic PyrB chains organized as two trimers (C3), and six regulatory PyrI chains organized as three dimers (R2).

The enzyme catalyses carbamoyl phosphate + L-aspartate = N-carbamoyl-L-aspartate + phosphate + H(+). The protein operates within pyrimidine metabolism; UMP biosynthesis via de novo pathway; (S)-dihydroorotate from bicarbonate: step 2/3. Functionally, catalyzes the condensation of carbamoyl phosphate and aspartate to form carbamoyl aspartate and inorganic phosphate, the committed step in the de novo pyrimidine nucleotide biosynthesis pathway. The chain is Aspartate carbamoyltransferase catalytic subunit from Gluconobacter oxydans (strain 621H) (Gluconobacter suboxydans).